We begin with the raw amino-acid sequence, 87 residues long: UPF0473 protein PTH_1066 (87 aa).

It belongs to the UPF0473 family.

This chain is UPF0473 protein PTH_1066, found in Pelotomaculum thermopropionicum (strain DSM 13744 / JCM 10971 / SI).